The sequence spans 672 residues: MHEVGLFVDLNSFTQLILTLFFVSIGLLYFVKRTAAKYFEVGGGSGGFDRDHRRDFMVSDTAECSVCGKATTKKCSRCKSVRYCSAACQTSDWKSGHKLKCKGFRSTDSSPVRRDDIDFEASLFGNRSASKKTRIALVPQQSQSKATLKPTDVLFPYESFVRYYNWDRPIMAPCGLTNCGNSCFANVVLQCLSWTRPLVAYLLERGHKRECRRNDWCFLCEFENHLDRANYSRFPFSPMNIISRLPNIGGNLGYGRQEDAHELMRFAIDMMQSVCLDEFGGEKVVPPRAQETTLIQYIFGGLLQSQVQCTACSNVSDQYENMMDLTVEIHGDAVSLEECLDQFTAKEWLQGDNLYKCDRCDDYVKACKRLSIRCAPNILTIALKRFQGGRFGKLNKRISFPETFDLGPYMSGGGEGSDVYKLYAVIVHLDMLNASFFGHYICYVKDFRGNWYRIDDSEVEKVELEDVLSQRAYMLLYSRVQPRPSNLRSEESQDEKKTDTLNTESNQDGSVESSGVGTNDTSVSSLCNGIISHSEDPEYEKESSLSASVPVSEEGKEVDVKVDTVDSESNRSIDMEHDSGTDHQEEEANGKEDPTVENLAVDSSCLDITTPSPSAATEFIPQENERSDTESKPLEKEHSDTESNKPLEKEHLDSESKPLEKEHSDTEMIDAQ.

Residues 11 to 31 (NSFTQLILTLFFVSIGLLYFV) form a helical membrane-spanning segment. Positions 64, 67, 75, 78, 84, 88, 97, and 101 each coordinate Zn(2+). The segment at 64–101 (CSVCGKATTKKCSRCKSVRYCSAACQTSDWKSGHKLKC) adopts an MYND-type zinc-finger fold. Residues 174 to 480 (CGLTNCGNSC…RAYMLLYSRV (307 aa)) form the USP domain. Cys-183 functions as the Nucleophile in the catalytic mechanism. His-439 serves as the catalytic Proton acceptor. Positions 484–672 (PSNLRSEESQ…HSDTEMIDAQ (189 aa)) are disordered. The segment covering 488–499 (RSEESQDEKKTD) has biased composition (basic and acidic residues). Polar residues predominate over residues 500 to 527 (TLNTESNQDGSVESSGVGTNDTSVSSLC). Composition is skewed to basic and acidic residues over residues 533–543 (HSEDPEYEKES) and 553–594 (EEGK…KEDP). A compositionally biased stretch (polar residues) spans 606–615 (LDITTPSPSA). Over residues 623 to 666 (ENERSDTESKPLEKEHSDTESNKPLEKEHLDSESKPLEKEHSDT) the composition is skewed to basic and acidic residues.

It belongs to the peptidase C19 family.

It localises to the membrane. The enzyme catalyses Thiol-dependent hydrolysis of ester, thioester, amide, peptide and isopeptide bonds formed by the C-terminal Gly of ubiquitin (a 76-residue protein attached to proteins as an intracellular targeting signal).. In terms of biological role, recognizes and hydrolyzes the peptide bond at the C-terminal Gly of ubiquitin. Involved in the processing of poly-ubiquitin precursors as well as that of ubiquitinated proteins. This is Ubiquitin carboxyl-terminal hydrolase 19 (UBP19) from Arabidopsis thaliana (Mouse-ear cress).